Consider the following 475-residue polypeptide: Pyruvate kinase (475 aa).

Position 36 (R36) interacts with substrate. K(+) contacts are provided by N38, S40, and D70. 38–41 (NFSH) lines the ATP pocket. ATP contacts are provided by R77 and K158. Position 223 (E223) interacts with Mg(2+). 3 residues coordinate substrate: G246, D247, and T279. A Mg(2+)-binding site is contributed by D247.

This sequence belongs to the pyruvate kinase family. In terms of assembly, homotetramer. The cofactor is a divalent metal cation.

The enzyme catalyses pyruvate + ATP = phosphoenolpyruvate + ADP + H(+). It functions in the pathway carbohydrate degradation; glycolysis; pyruvate from D-glyceraldehyde 3-phosphate: step 5/5. The protein is Pyruvate kinase (pki) of Thermococcus litoralis (strain ATCC 51850 / DSM 5473 / JCM 8560 / NS-C).